The sequence spans 341 residues: UDP-3-O-acylglucosamine N-acyltransferase (341 aa).

His242 functions as the Proton acceptor in the catalytic mechanism.

It belongs to the transferase hexapeptide repeat family. LpxD subfamily. In terms of assembly, homotrimer.

It catalyses the reaction a UDP-3-O-[(3R)-3-hydroxyacyl]-alpha-D-glucosamine + a (3R)-hydroxyacyl-[ACP] = a UDP-2-N,3-O-bis[(3R)-3-hydroxyacyl]-alpha-D-glucosamine + holo-[ACP] + H(+). The protein operates within bacterial outer membrane biogenesis; LPS lipid A biosynthesis. In terms of biological role, catalyzes the N-acylation of UDP-3-O-acylglucosamine using 3-hydroxyacyl-ACP as the acyl donor. Is involved in the biosynthesis of lipid A, a phosphorylated glycolipid that anchors the lipopolysaccharide to the outer membrane of the cell. In Haemophilus influenzae (strain ATCC 51907 / DSM 11121 / KW20 / Rd), this protein is UDP-3-O-acylglucosamine N-acyltransferase.